The following is a 61-amino-acid chain: Small ribosomal subunit protein uS14 (61 aa).

Zn(2+)-binding residues include Cys24, Cys27, Cys40, and Cys43.

It belongs to the universal ribosomal protein uS14 family. Zinc-binding uS14 subfamily. As to quaternary structure, part of the 30S ribosomal subunit. Contacts proteins S3 and S10. Zn(2+) serves as cofactor.

Its function is as follows. Binds 16S rRNA, required for the assembly of 30S particles and may also be responsible for determining the conformation of the 16S rRNA at the A site. The protein is Small ribosomal subunit protein uS14 of Desulfatibacillum aliphaticivorans.